A 337-amino-acid chain; its full sequence is Protein-methionine-sulfoxide reductase catalytic subunit MsrP (337 aa).

The segment at residues 1-54 (MLIKLPRSSECKASEITPEGIYLSRRTLLGGSLAGLALGALPGGVGAAQMSRYA) is a signal peptide (tat-type signal). Mo-molybdopterin-binding positions include Asn94, 97–98 (YE), Cys152, Thr187, Asn237, Arg242, and 253–255 (SIK).

Belongs to the MsrP family. Heterodimer of a catalytic subunit (MsrP) and a heme-binding subunit (MsrQ). Requires Mo-molybdopterin as cofactor. Post-translationally, predicted to be exported by the Tat system. The position of the signal peptide cleavage has not been experimentally proven.

The protein localises to the periplasm. It catalyses the reaction L-methionyl-[protein] + a quinone + H2O = L-methionyl-(S)-S-oxide-[protein] + a quinol. The catalysed reaction is L-methionyl-[protein] + a quinone + H2O = L-methionyl-(R)-S-oxide-[protein] + a quinol. Functionally, part of the MsrPQ system that repairs oxidized periplasmic proteins containing methionine sulfoxide residues (Met-O), using respiratory chain electrons. Thus protects these proteins from oxidative-stress damage caused by reactive species of oxygen and chlorine generated by the host defense mechanisms. MsrPQ is essential for the maintenance of envelope integrity under bleach stress, rescuing a wide series of structurally unrelated periplasmic proteins from methionine oxidation. The catalytic subunit MsrP is non-stereospecific, being able to reduce both (R-) and (S-) diastereoisomers of methionine sulfoxide. The polypeptide is Protein-methionine-sulfoxide reductase catalytic subunit MsrP (Pseudomonas putida (strain ATCC 47054 / DSM 6125 / CFBP 8728 / NCIMB 11950 / KT2440)).